We begin with the raw amino-acid sequence, 437 residues long: Nickel-cobalt-cadmium resistance protein NccC (437 aa).

The N-terminal stretch at 1–48 is a signal peptide; it reads MGAVLKAEANIFRSHPFRPMNQATPKKLRSAPCIGVALLLMATGSIQA.

Belongs to the outer membrane factor (OMF) (TC 1.B.17) family.

Its function is as follows. Component of the NCC cation-efflux system that confers resistance to nickel, cobalt and cadmium. This Alcaligenes xylosoxydans xylosoxydans (Achromobacter xylosoxidans) protein is Nickel-cobalt-cadmium resistance protein NccC (nccC).